A 952-amino-acid polypeptide reads, in one-letter code: Isoleucine--tRNA ligase (952 aa).

A 'HIGH' region motif is present at residues 58 to 68; that stretch reads PYANGDIHIGH. Glutamate 576 contributes to the L-isoleucyl-5'-AMP binding site. The short motif at 617 to 621 is the 'KMSKS' region element; that stretch reads KMSKS. Residue lysine 620 coordinates ATP. Zn(2+) contacts are provided by cysteine 915, cysteine 918, cysteine 935, and cysteine 938.

The protein belongs to the class-I aminoacyl-tRNA synthetase family. IleS type 1 subfamily. In terms of assembly, monomer. Requires Zn(2+) as cofactor.

It is found in the cytoplasm. The enzyme catalyses tRNA(Ile) + L-isoleucine + ATP = L-isoleucyl-tRNA(Ile) + AMP + diphosphate. Functionally, catalyzes the attachment of isoleucine to tRNA(Ile). As IleRS can inadvertently accommodate and process structurally similar amino acids such as valine, to avoid such errors it has two additional distinct tRNA(Ile)-dependent editing activities. One activity is designated as 'pretransfer' editing and involves the hydrolysis of activated Val-AMP. The other activity is designated 'posttransfer' editing and involves deacylation of mischarged Val-tRNA(Ile). The chain is Isoleucine--tRNA ligase from Vibrio atlanticus (strain LGP32) (Vibrio splendidus (strain Mel32)).